The primary structure comprises 441 residues: tRNA modification GTPase MnmE (441 aa).

R24, E81, and K121 together coordinate (6S)-5-formyl-5,6,7,8-tetrahydrofolate. The TrmE-type G domain maps to 218-366 (GMVVAIAGPP…LLRELTRFAA (149 aa)). Residues 228–233 (NVGKST), 247–253 (SPHAGTT), and 272–275 (DTAG) contribute to the GTP site. Mg(2+)-binding residues include S232 and T253. K441 provides a ligand contact to (6S)-5-formyl-5,6,7,8-tetrahydrofolate.

It belongs to the TRAFAC class TrmE-Era-EngA-EngB-Septin-like GTPase superfamily. TrmE GTPase family. In terms of assembly, homodimer. Heterotetramer of two MnmE and two MnmG subunits. K(+) serves as cofactor.

It is found in the cytoplasm. In terms of biological role, exhibits a very high intrinsic GTPase hydrolysis rate. Involved in the addition of a carboxymethylaminomethyl (cmnm) group at the wobble position (U34) of certain tRNAs, forming tRNA-cmnm(5)s(2)U34. This Rhodopseudomonas palustris (strain ATCC BAA-98 / CGA009) protein is tRNA modification GTPase MnmE.